A 342-amino-acid polypeptide reads, in one-letter code: UHRF1-like protein (342 aa).

The tract at residues 41–149 (SEATTLATPS…SHPGSEEEDI (109 aa)) is disordered. The segment covering 42-59 (EATTLATPSNLKTAGNQR) has biased composition (polar residues). Positions 74–90 (NRSDSPRKRPTKDREDL) are enriched in basic and acidic residues. A compositionally biased stretch (polar residues) spans 115–141 (TREQVTFNSDRDTPNTPSRQIKSTHSH). Positions 168-322 (GHIPGIGVGK…LMVCRYAFKR (155 aa)) constitute a YDG domain. Asp-218 provides a ligand contact to DNA. Residues 236 to 257 (KGTKQNPKNLRTAPQTSHQSFD) are disordered. Residues 238-257 (TKQNPKNLRTAPQTSHQSFD) show a composition bias toward polar residues.

It is found in the nucleus. Involved in the maintenance of DNA methylation. Binds hemimethylated DNA. In Cryptococcus neoformans var. grubii serotype A (strain H99 / ATCC 208821 / CBS 10515 / FGSC 9487) (Filobasidiella neoformans var. grubii), this protein is UHRF1-like protein.